The following is a 141-amino-acid chain: Large ribosomal subunit protein uL11 (141 aa).

It belongs to the universal ribosomal protein uL11 family. In terms of assembly, part of the ribosomal stalk of the 50S ribosomal subunit. Interacts with L10 and the large rRNA to form the base of the stalk. L10 forms an elongated spine to which L12 dimers bind in a sequential fashion forming a multimeric L10(L12)X complex. One or more lysine residues are methylated.

Its function is as follows. Forms part of the ribosomal stalk which helps the ribosome interact with GTP-bound translation factors. The sequence is that of Large ribosomal subunit protein uL11 from Prosthecochloris aestuarii (strain DSM 271 / SK 413).